A 420-amino-acid polypeptide reads, in one-letter code: UDP-N-acetylglucosamine 1-carboxyvinyltransferase (420 aa).

Position 22–23 (22–23) interacts with phosphoenolpyruvate; it reads KN. Position 92 (Arg92) interacts with UDP-N-acetyl-alpha-D-glucosamine. The Proton donor role is filled by Cys116. A 2-(S-cysteinyl)pyruvic acid O-phosphothioketal modification is found at Cys116. UDP-N-acetyl-alpha-D-glucosamine is bound by residues 121–125, Asp304, and Ile326; that span reads RPVDQ.

The protein belongs to the EPSP synthase family. MurA subfamily.

The protein resides in the cytoplasm. It catalyses the reaction phosphoenolpyruvate + UDP-N-acetyl-alpha-D-glucosamine = UDP-N-acetyl-3-O-(1-carboxyvinyl)-alpha-D-glucosamine + phosphate. The protein operates within cell wall biogenesis; peptidoglycan biosynthesis. In terms of biological role, cell wall formation. Adds enolpyruvyl to UDP-N-acetylglucosamine. This chain is UDP-N-acetylglucosamine 1-carboxyvinyltransferase, found in Paraburkholderia phytofirmans (strain DSM 17436 / LMG 22146 / PsJN) (Burkholderia phytofirmans).